The primary structure comprises 231 residues: Chalcone--flavanone isomerase (231 aa).

Residues Thr-46, Asn-112, and Ser-189 each contribute to the substrate site.

The protein belongs to the chalcone isomerase family.

It carries out the reaction a chalcone = a flavanone.. It functions in the pathway secondary metabolite biosynthesis; flavonoid biosynthesis. In terms of biological role, catalyzes the intramolecular cyclization of bicyclic chalcones into tricyclic (S)-flavanones. Responsible for the isomerization of 4,2',4',6'-tetrahydroxychalcone (also termed chalcone) into naringenin. This chain is Chalcone--flavanone isomerase (CHI), found in Hordeum vulgare (Barley).